Here is a 366-residue protein sequence, read N- to C-terminus: Chorismate synthase (366 aa).

NADP(+) is bound by residues Arg-48 and Arg-54. Residues 125–127, 238–239, Gly-278, 293–297, and Arg-319 each bind FMN; these read RSS, NA, and KPTSS.

The protein belongs to the chorismate synthase family. As to quaternary structure, homotetramer. FMNH2 is required as a cofactor.

It catalyses the reaction 5-O-(1-carboxyvinyl)-3-phosphoshikimate = chorismate + phosphate. It functions in the pathway metabolic intermediate biosynthesis; chorismate biosynthesis; chorismate from D-erythrose 4-phosphate and phosphoenolpyruvate: step 7/7. Catalyzes the anti-1,4-elimination of the C-3 phosphate and the C-6 proR hydrogen from 5-enolpyruvylshikimate-3-phosphate (EPSP) to yield chorismate, which is the branch point compound that serves as the starting substrate for the three terminal pathways of aromatic amino acid biosynthesis. This reaction introduces a second double bond into the aromatic ring system. In Burkholderia cenocepacia (strain HI2424), this protein is Chorismate synthase.